A 387-amino-acid chain; its full sequence is O-phospho-L-seryl-tRNA:Cys-tRNA synthase 2 (387 aa).

Pyridoxal 5'-phosphate contacts are provided by residues 89 to 90 (AR), Asn196, and 219 to 221 (SGH). An N6-(pyridoxal phosphate)lysine modification is found at Lys222.

It belongs to the SepCysS family. Homodimer. Interacts with SepRS. The cofactor is pyridoxal 5'-phosphate.

It carries out the reaction O-phospho-L-seryl-tRNA(Cys) + hydrogen sulfide + H(+) = L-cysteinyl-tRNA(Cys) + phosphate. In terms of biological role, converts O-phospho-L-seryl-tRNA(Cys) (Sep-tRNA(Cys)) to L-cysteinyl-tRNA(Cys) (Cys-tRNA(Cys)). The protein is O-phospho-L-seryl-tRNA:Cys-tRNA synthase 2 of Methanococcoides burtonii (strain DSM 6242 / NBRC 107633 / OCM 468 / ACE-M).